We begin with the raw amino-acid sequence, 158 residues long: Peroxidase (158 aa).

Position 2 (Pro-2) interacts with substrate. His-32 is a heme b binding site. Thr-33 contacts Ca(2+). A disulfide bridge connects residues Cys-39 and Cys-64. An N-linked (GlcNAc...) asparagine glycan is attached at Asn-48. Positions 78, 81, and 86 each coordinate Ca(2+).

It belongs to the peroxidase family. Classical plant (class III) peroxidase subfamily. Ca(2+) is required as a cofactor. Heme b serves as cofactor.

The catalysed reaction is 2 a phenolic donor + H2O2 = 2 a phenolic radical donor + 2 H2O. Removal of H(2)O(2), oxidation of toxic reductants, biosynthesis and degradation of lignin, suberization, auxin catabolism, response to environmental stresses such as wounding, pathogen attack and oxidative stress. These functions might be dependent on each isozyme/isoform in each plant tissue. The sequence is that of Peroxidase from Lupinus polyphyllus (Large-leaved lupine).